The sequence spans 601 residues: Protein FAM13C (601 aa).

Disordered stretches follow at residues 82-134 and 192-238; these read SMGN…PQSS and DGQV…EDLQ. Positions 98-111 are enriched in basic and acidic residues; it reads ESGRNHGESQETEH. The residue at position 130 (Ser130) is a Phosphoserine. Low complexity predominate over residues 200–217; it reads DPAPASTQSAPADSADPA. Phosphoserine is present on Ser258. 3 disordered regions span residues 268 to 304, 327 to 352, and 366 to 485; these read QRFN…KEPQ, FEQE…WMND, and KLSE…DPVS. Over residues 282–294 the composition is skewed to low complexity; the sequence is SSQQFMMPRSSSR. A compositionally biased stretch (basic and acidic residues) spans 327 to 342; the sequence is FEQEKKYRPSHGDKTS. Phosphoserine is present on residues Ser405 and Ser406. Positions 415-446 are enriched in basic and acidic residues; the sequence is VPEKREQTPPQDDGKGTKQDKNLIKPLYDRCR. Residues 462–471 are compositionally biased toward acidic residues; that stretch reads QEEEDSDEDC.

The protein belongs to the FAM13 family.

This Mus musculus (Mouse) protein is Protein FAM13C (Fam13c).